The following is a 544-amino-acid chain: NAD(P)H-quinone oxidoreductase chain 4 (544 aa).

A run of 14 helical transmembrane segments spans residues phenylalanine 29–valine 49, tryptophan 60–glycine 80, leucine 115–phenylalanine 135, leucine 139–aspartate 159, leucine 161–tryptophan 181, phenylalanine 193–phenylalanine 213, glycine 234–valine 254, threonine 268–phenylalanine 288, phenylalanine 302–phenylalanine 322, methionine 339–leucine 359, glutamine 360–aspartate 380, methionine 400–serine 422, isoleucine 442–methionine 462, and isoleucine 488–valine 508.

It belongs to the complex I subunit 4 family.

The protein resides in the cellular thylakoid membrane. It catalyses the reaction a plastoquinone + NADH + (n+1) H(+)(in) = a plastoquinol + NAD(+) + n H(+)(out). The catalysed reaction is a plastoquinone + NADPH + (n+1) H(+)(in) = a plastoquinol + NADP(+) + n H(+)(out). Functionally, NDH-1 shuttles electrons from NAD(P)H, via FMN and iron-sulfur (Fe-S) centers, to quinones in the respiratory chain. The immediate electron acceptor for the enzyme in this species is believed to be plastoquinone. Couples the redox reaction to proton translocation (for every two electrons transferred, four hydrogen ions are translocated across the cytoplasmic membrane), and thus conserves the redox energy in a proton gradient. The chain is NAD(P)H-quinone oxidoreductase chain 4 from Synechococcus sp. (strain RCC307).